Here is a 732-residue protein sequence, read N- to C-terminus: MAP7 domain-containing protein 2 (732 aa).

At Met-1 the chain carries N-acetylmethionine. Gly residues predominate over residues Met-1 to Thr-10. Disordered stretches follow at residues Met-1–Glu-64, Trp-95–Glu-123, Pro-157–Ser-186, Gly-210–Ala-244, and Glu-279–Glu-509. Residues Leu-49–Glu-64 are compositionally biased toward basic and acidic residues. The stretch at Ser-51–Lys-146 forms a coiled coil. Basic and acidic residues predominate over residues Met-329–Gly-345. Residues Leu-347–Glu-357 are compositionally biased toward low complexity. Over residues Ala-359–Ala-374 the composition is skewed to basic and acidic residues. Positions Ala-375–Ala-386 are enriched in low complexity. The segment covering Leu-404–Glu-509 has biased composition (basic and acidic residues).

The protein belongs to the MAP7 family. In terms of assembly, interacts (via N-terminus) with microtubules; facilitates microtubule stabilization. Interacts with kinesin-1 family members, KIF5A, KIF5B and KIF5C.

It is found in the cytoplasm. It localises to the cytoskeleton. Its subcellular location is the microtubule organizing center. The protein localises to the centrosome. The protein resides in the midbody. It is found in the cell projection. It localises to the neuron projection. Its subcellular location is the axon. In terms of biological role, microtubule-stabilizing protein that plays a role in the control of cell motility and neurite outgrowth via direct binding to the microtubule. Acts as a critical cofactor for kinesin transport. In the proximal axon, regulates kinesin-1 family members, KIF5A, KIF5B and KIF5C recruitment to microtubules and contributes to kinesin-1-mediated transport in the axons. The sequence is that of MAP7 domain-containing protein 2 (MAP7D2) from Homo sapiens (Human).